We begin with the raw amino-acid sequence, 388 residues long: Chitinase 4 (388 aa).

The GH18 domain occupies F22–V375. Residues N30 and N82 are each glycosylated (N-linked (GlcNAc...) asparagine). Chitin-binding positions include N82 to Q83 and G109 to G112. N-linked (GlcNAc...) asparagine glycans are attached at residues N123 and N132. Residue E151 is the Proton donor of the active site. Residue Y152 participates in chitin binding. N155 is a glycosylation site (N-linked (GlcNAc...) asparagine). A chitin-binding site is contributed by M208–D211. N237 carries N-linked (GlcNAc...) asparagine glycosylation. Position 350 (W350) interacts with chitin.

Belongs to the glycosyl hydrolase 18 family. Chitinase class V subfamily.

Its subcellular location is the secreted. The enzyme catalyses Random endo-hydrolysis of N-acetyl-beta-D-glucosaminide (1-&gt;4)-beta-linkages in chitin and chitodextrins.. Functionally, chitinase involved in the remodeling of chitin in the fungal cell wall. Plays a role in sporulation. This Candida albicans (strain SC5314 / ATCC MYA-2876) (Yeast) protein is Chitinase 4 (CHT4).